Reading from the N-terminus, the 214-residue chain is Peptide methionine sulfoxide reductase MsrA 2 (214 aa).

Cys-45 is a catalytic residue.

This sequence belongs to the MsrA Met sulfoxide reductase family.

It catalyses the reaction L-methionyl-[protein] + [thioredoxin]-disulfide + H2O = L-methionyl-(S)-S-oxide-[protein] + [thioredoxin]-dithiol. It carries out the reaction [thioredoxin]-disulfide + L-methionine + H2O = L-methionine (S)-S-oxide + [thioredoxin]-dithiol. Has an important function as a repair enzyme for proteins that have been inactivated by oxidation. Catalyzes the reversible oxidation-reduction of methionine sulfoxide in proteins to methionine. The sequence is that of Peptide methionine sulfoxide reductase MsrA 2 (msrA2) from Synechocystis sp. (strain ATCC 27184 / PCC 6803 / Kazusa).